The sequence spans 363 residues: Aminomethyltransferase (363 aa).

Belongs to the GcvT family. In terms of assembly, the glycine cleavage system is composed of four proteins: P, T, L and H.

It catalyses the reaction N(6)-[(R)-S(8)-aminomethyldihydrolipoyl]-L-lysyl-[protein] + (6S)-5,6,7,8-tetrahydrofolate = N(6)-[(R)-dihydrolipoyl]-L-lysyl-[protein] + (6R)-5,10-methylene-5,6,7,8-tetrahydrofolate + NH4(+). Functionally, the glycine cleavage system catalyzes the degradation of glycine. The polypeptide is Aminomethyltransferase (Staphylococcus aureus (strain bovine RF122 / ET3-1)).